A 247-amino-acid chain; its full sequence is Carboxy-S-adenosyl-L-methionine synthase (247 aa).

Residues Tyr-39, 64 to 66 (GCS), 89 to 90 (DN), 117 to 118 (DI), Asn-132, and Arg-199 contribute to the S-adenosyl-L-methionine site.

This sequence belongs to the class I-like SAM-binding methyltransferase superfamily. Cx-SAM synthase family. In terms of assembly, homodimer.

The enzyme catalyses prephenate + S-adenosyl-L-methionine = carboxy-S-adenosyl-L-methionine + 3-phenylpyruvate + H2O. Functionally, catalyzes the conversion of S-adenosyl-L-methionine (SAM) to carboxy-S-adenosyl-L-methionine (Cx-SAM). The sequence is that of Carboxy-S-adenosyl-L-methionine synthase from Salmonella arizonae (strain ATCC BAA-731 / CDC346-86 / RSK2980).